The primary structure comprises 710 residues: Dual specificity protein kinase shkE (710 aa).

Composition is skewed to low complexity over residues 83–94 (DVSDSNNNNSTS), 107–129 (NNNNNNNNNNNNNNNNNNNNNNN), and 197–208 (QKQQQSQASIQQ). Disordered regions lie at residues 83–136 (DVSD…PTVI) and 189–232 (QHLT…IPPE). The region spanning 237–495 (DVKTDLLGGG…EVTQRMNEVL (259 aa)) is the Protein kinase domain. ATP is bound by residues 243 to 251 (LGGGAYGKV) and K264. The Proton acceptor role is filled by D359. An SH2 domain is found at 597–707 (WFHFDISRDI…CPITEIKVPY (111 aa)).

It belongs to the protein kinase superfamily. Ser/Thr protein kinase family. SH2 domain-containing protein kinase subfamily.

It localises to the membrane. The catalysed reaction is L-seryl-[protein] + ATP = O-phospho-L-seryl-[protein] + ADP + H(+). The enzyme catalyses L-threonyl-[protein] + ATP = O-phospho-L-threonyl-[protein] + ADP + H(+). Required for proper chemotaxis and phagocytosis; proper spatiotemporal control of F-actin levels in chemotaxing cells. Negative regulator of the PI3K (phosphatidylinositol 3 kinase) pathway. Predominantly phosphorylates serines and threonines and tyrosines at a lower level. This chain is Dual specificity protein kinase shkE (shkE), found in Dictyostelium discoideum (Social amoeba).